The sequence spans 438 residues: MYVFLLFSRYKIFYVYIKKMAHRSRCNCNDTSNSNGSQHGINLPLRKIDTYDPCVNCRVKPHLCPKPHPCPKPENLEADIVIIGAGAAGCVLAYYLTKFSDLKIILLEAGHTHFNDPVVTDPMGFFGKYNPPNENIRMSQNPSYAWQPALEPDTGAYSMRNVVAHGLAVGGSTAINQLNYIVGGRTVFDNDWPTGWKYDDIKKYFRRVLADISPIRDGTKVNLTNTILESMRVLADQQVSSGVPVDFLINKATGGLPNIEQTYQGAPIVNLNDYEGINSVCGFKSYYVGVNQLSDGSYIRKYAGNTYLNSYYVDSNGFGIGKFSNLRVISDAVVDRIHFEGQRAVSVTYIDKKGNLHSVKVHKEVEICSGSFFTPTILQRSGIGDFSYLSSIGVPDLVYNNPLVGQGLRNHYSPITQVSVTGPDAAAFLSNTAAGPTI.

The signal sequence occupies residues 1–26 (MYVFLLFSRYKIFYVYIKKMAHRSRC). Position 79–109 (79–109 (DIVIIGAGAAGCVLAYYLTKFSDLKIILLEA)) interacts with FAD.

The protein belongs to the GMC oxidoreductase family. FAD serves as cofactor.

The protein localises to the virion. The protein is Putative truncated GMC-type inactive oxidoreductase L894 of Acanthamoeba polyphaga (Amoeba).